We begin with the raw amino-acid sequence, 246 residues long: Phosducin (246 aa).

Residues 1-14 show a composition bias toward acidic residues; the sequence is MEEAASQSLEEDFE. The segment at 1–70 is disordered; that stretch reads MEEAASQSLE…DKDSKERMSR (70 aa). Residues 1–246 enclose the Phosducin domain; the sequence is MEEAASQSLE…QTNTEDEDIE (246 aa). Positions 58-69 are enriched in basic and acidic residues; it reads SRDDKDSKERMS. Residue S73 is modified to Phosphoserine; by PKA. The thioredoxin fold stretch occupies residues 111-246; that stretch reads YGFVYELETG…QTNTEDEDIE (136 aa).

This sequence belongs to the phosducin family. Interacts with CRX. Forms a complex with the beta and gamma subunits of the GTP-binding protein, transducin. Light-induced changes in cyclic nucleotide levels modulate the phosphorylation of this protein by cAMP kinase.

The protein resides in the cytoplasm. Its subcellular location is the cytosol. It is found in the nucleus. It localises to the cell projection. The protein localises to the cilium. The protein resides in the photoreceptor outer segment. Its subcellular location is the photoreceptor inner segment. Inhibits the transcriptional activation activity of the cone-rod homeobox CRX. May participate in the regulation of visual phototransduction or in the integration of photoreceptor metabolism. The protein is Phosducin (Pdc) of Rattus norvegicus (Rat).